We begin with the raw amino-acid sequence, 353 residues long: Histidinol-phosphate aminotransferase (353 aa).

K218 is subject to N6-(pyridoxal phosphate)lysine.

Belongs to the class-II pyridoxal-phosphate-dependent aminotransferase family. Histidinol-phosphate aminotransferase subfamily. In terms of assembly, homodimer. It depends on pyridoxal 5'-phosphate as a cofactor.

It catalyses the reaction L-histidinol phosphate + 2-oxoglutarate = 3-(imidazol-4-yl)-2-oxopropyl phosphate + L-glutamate. Its pathway is amino-acid biosynthesis; L-histidine biosynthesis; L-histidine from 5-phospho-alpha-D-ribose 1-diphosphate: step 7/9. In Synechococcus sp. (strain JA-2-3B'a(2-13)) (Cyanobacteria bacterium Yellowstone B-Prime), this protein is Histidinol-phosphate aminotransferase.